Consider the following 304-residue polypeptide: UDP-3-O-acyl-N-acetylglucosamine deacetylase (304 aa).

The Zn(2+) site is built by His78, His237, and Asp241. His264 acts as the Proton donor in catalysis.

It belongs to the LpxC family. It depends on Zn(2+) as a cofactor.

It carries out the reaction a UDP-3-O-[(3R)-3-hydroxyacyl]-N-acetyl-alpha-D-glucosamine + H2O = a UDP-3-O-[(3R)-3-hydroxyacyl]-alpha-D-glucosamine + acetate. It functions in the pathway glycolipid biosynthesis; lipid IV(A) biosynthesis; lipid IV(A) from (3R)-3-hydroxytetradecanoyl-[acyl-carrier-protein] and UDP-N-acetyl-alpha-D-glucosamine: step 2/6. Functionally, catalyzes the hydrolysis of UDP-3-O-myristoyl-N-acetylglucosamine to form UDP-3-O-myristoylglucosamine and acetate, the committed step in lipid A biosynthesis. This chain is UDP-3-O-acyl-N-acetylglucosamine deacetylase, found in Xylella fastidiosa (strain 9a5c).